Reading from the N-terminus, the 265-residue chain is Shikimate dehydrogenase (NADP(+)) (265 aa).

Shikimate contacts are provided by residues 15–17 and Thr-62; that span reads SKS. Lys-66 acts as the Proton acceptor in catalysis. Residues Asn-87 and Asp-102 each contribute to the shikimate site. Residues 127-131, 151-156, and Met-212 contribute to the NADP(+) site; these read GAGGA and NRTVSR. Position 214 (Tyr-214) interacts with shikimate. Gly-234 is a binding site for NADP(+).

The protein belongs to the shikimate dehydrogenase family. As to quaternary structure, homodimer.

It catalyses the reaction shikimate + NADP(+) = 3-dehydroshikimate + NADPH + H(+). It participates in metabolic intermediate biosynthesis; chorismate biosynthesis; chorismate from D-erythrose 4-phosphate and phosphoenolpyruvate: step 4/7. Involved in the biosynthesis of the chorismate, which leads to the biosynthesis of aromatic amino acids. Catalyzes the reversible NADPH linked reduction of 3-dehydroshikimate (DHSA) to yield shikimate (SA). The polypeptide is Shikimate dehydrogenase (NADP(+)) (Thiobacillus denitrificans (strain ATCC 25259 / T1)).